An 89-amino-acid chain; its full sequence is Small ribosomal subunit protein uS15 (89 aa).

It belongs to the universal ribosomal protein uS15 family. Part of the 30S ribosomal subunit. Forms a bridge to the 50S subunit in the 70S ribosome, contacting the 23S rRNA.

Its function is as follows. One of the primary rRNA binding proteins, it binds directly to 16S rRNA where it helps nucleate assembly of the platform of the 30S subunit by binding and bridging several RNA helices of the 16S rRNA. In terms of biological role, forms an intersubunit bridge (bridge B4) with the 23S rRNA of the 50S subunit in the ribosome. The sequence is that of Small ribosomal subunit protein uS15 from Prochlorococcus marinus (strain MIT 9515).